The sequence spans 314 residues: Olfactory receptor 5P68 (314 aa).

Topologically, residues M1–V28 are extracellular. A glycan (N-linked (GlcNAc...) asparagine) is linked at N8. A helical transmembrane segment spans residues I29 to I49. The Cytoplasmic segment spans residues L50 to Q57. A helical transmembrane segment spans residues L58–S78. Residues S79 to I102 lie on the Extracellular side of the membrane. C100 and C192 are joined by a disulfide. Residues Q103–Y123 form a helical membrane-spanning segment. Residues D124–S136 are Cytoplasmic-facing. Residues T137–L157 traverse the membrane as a helical segment. Residues N158 to E199 are Extracellular-facing. The chain crosses the membrane as a helical span at residues V200–S220. Residues Y221–A240 are Cytoplasmic-facing. Residues F241–I261 traverse the membrane as a helical segment. Residues Y262–N274 lie on the Extracellular side of the membrane. The helical transmembrane segment at K275–L295 threads the bilayer. At R296–S314 the chain is on the cytoplasmic side.

It belongs to the G-protein coupled receptor 1 family.

The protein resides in the cell membrane. Potential odorant receptor. This chain is Olfactory receptor 5P68, found in Mus musculus (Mouse).